A 550-amino-acid chain; its full sequence is Glycosyltransferase-like protein gnt12 (550 aa).

The disordered stretch occupies residues 1-29 (MSYLPLYNNNNNINNNNNNNNNRINNNKE). Over 1–36 (MSYLPLYNNNNNINNNNNNNNNRINNNKEKGVKNKP) the chain is Cytoplasmic. Residues 8–25 (NNNNNINNNNNNNNNRIN) are compositionally biased toward low complexity. The helical; Signal-anchor for type II membrane protein transmembrane segment at 37-57 (FQIFISIVFIVFLCFFLIWSM) threads the bilayer. Residues 58 to 550 (EAKKDKNIKI…LFNEPLTNEC (493 aa)) lie on the Extracellular side of the membrane. Low complexity predominate over residues 81 to 97 (LINEPINNNKNNKNNIP). Positions 81–100 (LINEPINNNKNNKNNIPKNH) are disordered. Asparagine 233, asparagine 322, and asparagine 426 each carry an N-linked (GlcNAc...) asparagine glycan.

The protein belongs to the glycosyltransferase 8 family. Highly divergent.

Its subcellular location is the membrane. This Dictyostelium discoideum (Social amoeba) protein is Glycosyltransferase-like protein gnt12 (gnt12).